Here is a 121-residue protein sequence, read N- to C-terminus: Large ribosomal subunit protein uL14c (121 aa).

Belongs to the universal ribosomal protein uL14 family. Part of the 50S ribosomal subunit.

It is found in the plastid. It localises to the chloroplast. Its function is as follows. Binds to 23S rRNA. The sequence is that of Large ribosomal subunit protein uL14c from Euglena gracilis.